The primary structure comprises 148 residues: Large ribosomal subunit protein bL9 (148 aa).

Belongs to the bacterial ribosomal protein bL9 family.

In terms of biological role, binds to the 23S rRNA. The polypeptide is Large ribosomal subunit protein bL9 (Staphylococcus aureus (strain Newman)).